The primary structure comprises 234 residues: Small ribosomal subunit protein uS2 (234 aa).

Belongs to the universal ribosomal protein uS2 family.

The protein is Small ribosomal subunit protein uS2 of Prochlorococcus marinus subsp. pastoris (strain CCMP1986 / NIES-2087 / MED4).